Consider the following 490-residue polypeptide: tRNA-guanine(15) transglycosylase (490 aa).

Asp-90 serves as the catalytic Nucleophile. Residues Asp-125 and Ala-193 each contribute to the substrate site. 3 residues coordinate Zn(2+): Cys-276, Cys-278, and Cys-281.

It belongs to the archaeosine tRNA-ribosyltransferase family. It depends on Zn(2+) as a cofactor.

It carries out the reaction guanosine(15) in tRNA + 7-cyano-7-deazaguanine = 7-cyano-7-carbaguanosine(15) in tRNA + guanine. It participates in tRNA modification; archaeosine-tRNA biosynthesis. Its function is as follows. Exchanges the guanine residue with 7-cyano-7-deazaguanine (preQ0) at position 15 in the dihydrouridine loop (D-loop) of archaeal tRNAs. This chain is tRNA-guanine(15) transglycosylase, found in Methanosarcina barkeri (strain Fusaro / DSM 804).